The chain runs to 498 residues: Lysine--tRNA ligase (498 aa).

Glu-407 and Glu-414 together coordinate Mg(2+).

Belongs to the class-II aminoacyl-tRNA synthetase family. Homodimer. Mg(2+) serves as cofactor.

It localises to the cytoplasm. The enzyme catalyses tRNA(Lys) + L-lysine + ATP = L-lysyl-tRNA(Lys) + AMP + diphosphate. The protein is Lysine--tRNA ligase of Sinorhizobium medicae (strain WSM419) (Ensifer medicae).